Consider the following 38-residue polypeptide: Large ribosomal subunit protein bL36 (38 aa).

Belongs to the bacterial ribosomal protein bL36 family.

The chain is Large ribosomal subunit protein bL36 from Hahella chejuensis (strain KCTC 2396).